The chain runs to 258 residues: Acetylglutamate kinase (258 aa).

Substrate contacts are provided by residues 44–45, Arg-66, and Asn-158; that span reads GG. Residues 181-186 and 209-211 each bind ATP; these read DVSGIL and IIT.

It belongs to the acetylglutamate kinase family. ArgB subfamily. As to quaternary structure, homodimer.

It is found in the cytoplasm. The enzyme catalyses N-acetyl-L-glutamate + ATP = N-acetyl-L-glutamyl 5-phosphate + ADP. It functions in the pathway amino-acid biosynthesis; L-arginine biosynthesis; N(2)-acetyl-L-ornithine from L-glutamate: step 2/4. Functionally, catalyzes the ATP-dependent phosphorylation of N-acetyl-L-glutamate. The protein is Acetylglutamate kinase of Salmonella arizonae (strain ATCC BAA-731 / CDC346-86 / RSK2980).